The following is a 130-amino-acid chain: P antigen family member 5 (130 aa).

2 disordered regions span residues 1 to 88 (MQAP…TDVE) and 101 to 130 (DAPGDGPDVREGTLPTFDPTKVLEAGEGQL). Over residues 14–26 (TREEVRDMSEHVT) the composition is skewed to basic and acidic residues. Polar residues predominate over residues 27–42 (RSQSSERGNDQESSQP). Phosphothreonine occurs at positions 113 and 116.

The protein belongs to the GAGE family.

The sequence is that of P antigen family member 5 (PAGE5) from Homo sapiens (Human).